Reading from the N-terminus, the 119-residue chain is MHEYSIVTALLELCENHAKSNKAKKVTKVVVALGERSGVEPQLLESAFEVFKLDSVCAESELVIETKPMKFRCRSCGAEFLPKGIDFGSCEVCKAPNPELVGGKEMHLQSLEMEAEDEG.

His-2 serves as a coordination point for Ni(2+). Zn(2+) is bound by residues Cys-73, Cys-76, Cys-90, and Cys-93.

The protein belongs to the HypA/HybF family.

Involved in the maturation of [NiFe] hydrogenases. Required for nickel insertion into the metal center of the hydrogenase. The sequence is that of Hydrogenase maturation factor HypA from Wolinella succinogenes (strain ATCC 29543 / DSM 1740 / CCUG 13145 / JCM 31913 / LMG 7466 / NCTC 11488 / FDC 602W) (Vibrio succinogenes).